A 129-amino-acid polypeptide reads, in one-letter code: Large ribosomal subunit protein eL32 (129 aa).

It belongs to the eukaryotic ribosomal protein eL32 family.

In Methanosarcina mazei (strain ATCC BAA-159 / DSM 3647 / Goe1 / Go1 / JCM 11833 / OCM 88) (Methanosarcina frisia), this protein is Large ribosomal subunit protein eL32 (rpl32e).